The chain runs to 165 residues: Myosin regulatory light chain 2B, cardiac muscle isoform (165 aa).

Ala-2 bears the N,N,N-trimethylalanine mark. EF-hand domains follow at residues 23-58 (TQIQEFKEAFTIMDQNRDGFIDKADLRDTFAALGRL), 93-128 (DPEETILNAFKIFDPEGKGHIKADYIKEMLMTQEGR), and 129-164 (FSQEEINQMFAAFPPDVSGNLDYKNLCYVITHGEEK). Ca(2+)-binding residues include Asp-36, Asn-38, Asp-40, and Asp-47.

As to quaternary structure, myosin is a hexamer of 2 heavy chains and 4 light chains. In terms of processing, the N-terminus is blocked. N,N,N-trimethylalanine, found in other myosin light chains would not have been detected in the N-terminal tryptic peptide in PubMed:7319048 because it would remain trimethylated and ninhydrin negative after hydrolysis.

The chain is Myosin regulatory light chain 2B, cardiac muscle isoform from Gallus gallus (Chicken).